Here is a 483-residue protein sequence, read N- to C-terminus: Cobyric acid synthase (483 aa).

Residues 248–435 (LLKVVVPVLP…LHGLFETPAA (188 aa)) form the GATase cobBQ-type domain. Residue C329 is the Nucleophile of the active site. The active site involves H427.

The protein belongs to the CobB/CobQ family. CobQ subfamily.

It participates in cofactor biosynthesis; adenosylcobalamin biosynthesis. Catalyzes amidations at positions B, D, E, and G on adenosylcobyrinic A,C-diamide. NH(2) groups are provided by glutamine, and one molecule of ATP is hydrogenolyzed for each amidation. The chain is Cobyric acid synthase from Pseudomonas fluorescens (strain ATCC BAA-477 / NRRL B-23932 / Pf-5).